A 333-amino-acid chain; its full sequence is Probable G-protein coupled receptor 33 (333 aa).

The Extracellular portion of the chain corresponds to 1–30 (MDLINSTDYLINASTLVRNSTQFLAPASKM). Residues Asn5, Asn12, and Asn19 are each glycosylated (N-linked (GlcNAc...) asparagine). A helical membrane pass occupies residues 31–53 (IIALSLYISSIIGTITNGLYLWV). Topologically, residues 54–64 (LRFKMKQTVNT) are cytoplasmic. Residues 65 to 86 (LLFFHLILSYFISTMILPFMAT) form a helical membrane-spanning segment. Topologically, residues 87–103 (SQLQDNHWNFGTALCKV) are extracellular. Cys101 and Cys179 form a disulfide bridge. The helical transmembrane segment at 104-124 (FNGTLSLGMFTSVFFLSAIGL) threads the bilayer. Residues 125 to 143 (DRYLLTLHPVWSQQHRTPR) lie on the Cytoplasmic side of the membrane. Residues 144–165 (WASSIVLGVWISAAALSIPYLI) traverse the membrane as a helical segment. At 166-209 (FRQTHHDRKGKVTCQNNYAVSTNWESKEMQALRQWIHVACFISR) the chain is on the extracellular side. Residues 210-230 (FLLGFLLPFFIIIFCYERVAS) form a helical membrane-spanning segment. The Cytoplasmic portion of the chain corresponds to 231-246 (KVKERSLFKSSKPFKV). A helical membrane pass occupies residues 247–268 (MMTAIISFFVCWMPYHIHQGLL). At 269–283 (LTTNQSLLLELTLIL) the chain is on the extracellular side. Asn272 carries N-linked (GlcNAc...) asparagine glycosylation. Residues 284–303 (TVLTTSFNTIFSPTLYLFVG) form a helical membrane-spanning segment. Residues 304 to 333 (ENFKKVFKKSILALFESTFSEDSSVERTQT) lie on the Cytoplasmic side of the membrane.

This sequence belongs to the G-protein coupled receptor 1 family.

The protein resides in the cell membrane. Orphan receptor; could be a chemoattractant receptor. This Pan troglodytes (Chimpanzee) protein is Probable G-protein coupled receptor 33 (GPR33).